The sequence spans 137 residues: Drosulfakinins (137 aa).

Residues 1 to 31 (MGLRSCTHFATLVIPLWALAFCFLVVVPVPA) form the signal peptide. A propeptide spanning residues 32–74 (QTNLQTSKGDRRLQDLESNMGAESDQPNANLVRPSLSRFGDKR) is cleaved from the precursor. The residue at position 81 (phenylalanine 81) is a Phenylalanine amide. Residues 85–107 (VPRPMIPIELDLLMDNDDENTKA) constitute a propeptide that is removed on maturation. Tyrosine 113 is subject to Sulfotyrosine. Phenylalanine 118 is subject to Phenylalanine amide. Sulfotyrosine is present on tyrosine 130. At phenylalanine 135 the chain carries Phenylalanine amide.

The protein belongs to the gastrin/cholecystokinin family.

The protein localises to the secreted. Functionally, drosulfakinin-0 (DSK 0) plays diverse biological roles including regulating gut muscle contraction in adults but not in larvae. The protein is Drosulfakinins of Drosophila yakuba (Fruit fly).